Reading from the N-terminus, the 379-residue chain is Cytochrome b (379 aa).

4 helical membrane passes run Phe-34 to Thr-54, Trp-78 to Ile-99, Trp-114 to Leu-134, and Phe-179 to Thr-199. The heme b site is built by His-84 and His-98. Residues His-183 and His-197 each contribute to the heme b site. Residue His-202 coordinates a ubiquinone. 4 consecutive transmembrane segments (helical) span residues Thr-227–Phe-247, Leu-289–His-309, Met-321–Ser-341, and Phe-348–Pro-368.

The protein belongs to the cytochrome b family. As to quaternary structure, the cytochrome bc1 complex contains 11 subunits: 3 respiratory subunits (MT-CYB, CYC1 and UQCRFS1), 2 core proteins (UQCRC1 and UQCRC2) and 6 low-molecular weight proteins (UQCRH/QCR6, UQCRB/QCR7, UQCRQ/QCR8, UQCR10/QCR9, UQCR11/QCR10 and a cleavage product of UQCRFS1). This cytochrome bc1 complex then forms a dimer. Heme b is required as a cofactor.

The protein resides in the mitochondrion inner membrane. In terms of biological role, component of the ubiquinol-cytochrome c reductase complex (complex III or cytochrome b-c1 complex) that is part of the mitochondrial respiratory chain. The b-c1 complex mediates electron transfer from ubiquinol to cytochrome c. Contributes to the generation of a proton gradient across the mitochondrial membrane that is then used for ATP synthesis. The protein is Cytochrome b (MT-CYB) of Tinamus major (Great tinamou).